A 458-amino-acid chain; its full sequence is Transcription factor Atf1 (458 aa).

In terms of domain architecture, bZIP spans 347–410 (EEKRRNFLER…VNLKTLLLAH (64 aa)). The basic motif stretch occupies residues 349 to 378 (KRRNFLERNRVAALKCRQRKKQWLANLQNK). Residues 389–403 (LTATVTQLREEIVNL) are leucine-zipper.

This sequence belongs to the bZIP family.

It localises to the nucleus. Functionally, transcription factor that positively regulates vegetative growth, reproduction, and osmotic stress response. The chain is Transcription factor Atf1 from Penicillium expansum (Blue mold rot fungus).